Consider the following 131-residue polypeptide: Maturin (131 aa).

Y34 carries the phosphotyrosine modification. Residues 107–120 show a composition bias toward acidic residues; that stretch reads FEEYSADVEEEEPE. The interval 107-131 is disordered; it reads FEEYSADVEEEEPEADHPQMGVSQQ.

Belongs to the MTURN family. In terms of processing, phosphorylation at Tyr-34 is essential for its ability to promote megakaryocyte differentiation.

Its subcellular location is the cytoplasm. Promotes megakaryocyte differentiation by enhancing ERK and JNK signaling as well as up-regulating RUNX1 and FLI1 expression. Represses NF-kappa-B transcriptional activity by inhibiting phosphorylation of RELA at 'Ser- 536'. May be involved in early neuronal development. In Bos taurus (Bovine), this protein is Maturin (MTURN).